The chain runs to 165 residues: 3-isopropylmalate dehydratase small subunit (165 aa).

This sequence belongs to the LeuD family. LeuD type 2 subfamily. As to quaternary structure, heterodimer of LeuC and LeuD.

The catalysed reaction is (2R,3S)-3-isopropylmalate = (2S)-2-isopropylmalate. The protein operates within amino-acid biosynthesis; L-leucine biosynthesis; L-leucine from 3-methyl-2-oxobutanoate: step 2/4. In terms of biological role, catalyzes the isomerization between 2-isopropylmalate and 3-isopropylmalate, via the formation of 2-isopropylmaleate. This is 3-isopropylmalate dehydratase small subunit from Helicobacter hepaticus (strain ATCC 51449 / 3B1).